The chain runs to 162 residues: N5-carboxyaminoimidazole ribonucleotide mutase (162 aa).

Substrate contacts are provided by Ser-11, Asp-14, and Arg-41.

This sequence belongs to the AIR carboxylase family. Class I subfamily.

The catalysed reaction is 5-carboxyamino-1-(5-phospho-D-ribosyl)imidazole + H(+) = 5-amino-1-(5-phospho-D-ribosyl)imidazole-4-carboxylate. The protein operates within purine metabolism; IMP biosynthesis via de novo pathway; 5-amino-1-(5-phospho-D-ribosyl)imidazole-4-carboxylate from 5-amino-1-(5-phospho-D-ribosyl)imidazole (N5-CAIR route): step 2/2. Functionally, catalyzes the conversion of N5-carboxyaminoimidazole ribonucleotide (N5-CAIR) to 4-carboxy-5-aminoimidazole ribonucleotide (CAIR). In Bacillus subtilis (strain 168), this protein is N5-carboxyaminoimidazole ribonucleotide mutase.